Here is a 318-residue protein sequence, read N- to C-terminus: Phospholipid scramblase 1 (318 aa).

Polar residues predominate over residues 1–14 (MDKQNSQMNASHPE). Residues 1–64 (MDKQNSQMNA…GPGPAGFPVP (64 aa)) are disordered. A proline-rich domain (PRD) region spans residues 1-84 (MDKQNSQMNA…NQPVGAAGVP (84 aa)). The Cytoplasmic portion of the chain corresponds to 1-288 (MDKQNSQMNA…IQFPLDLDVK (288 aa)). Positions 18 to 26 (PVGYPPQYP) match the SH3-binding 1 motif. 2 short sequence motifs (PPXY motif) span residues 22-25 (PPQY) and 33-36 (PPGY). Low complexity predominate over residues 31 to 44 (QGPPGYSGYPGPQV). The SH3-binding 2 motif lies at 42-50 (PQVSYPPPP). Phosphotyrosine; by ABL is present on residues Y69 and Y74. The SH3-binding 3 motif lies at 84-92 (PWMPAPQPP). Residues 99–290 (LEYLSQIDQI…FPLDLDVKMK (192 aa)) form an interaction with hepatitis C virus E2 glycoprotein region. A Phosphothreonine; by PKC/PRKCD modification is found at T161. 5 S-palmitoyl cysteine lipidation sites follow: C184, C185, C186, C188, and C189. The Nuclear localization signal motif lies at 257-266 (GKISKHWTGI). A helical transmembrane segment spans residues 289–305 (MKAVMIGACFLIDFMFF). The Extracellular segment spans residues 306–318 (ESTGSQEQKSGVW).

Belongs to the phospholipid scramblase family. Forms homooligomers in the presence of calcium. Interacts with ABL. Interacts with RELT, RELL1 and RELL2. Interacts with OXSR1 in the presence of RELT. Interacts with TOP2A and TOP2B. Interacts with OCLN. Interacts with TRPC5. Interacts with TRPC1 and TRPC4. Interacts with ILDR1. In terms of assembly, (Microbial infection) Interacts with hepatitis C virus E1 and E2 glycoproteins. As to quaternary structure, (Microbial infection) Interacts with T-cell leukemia virus (HTLV)-1 protein Tax (via N-terminus); this interaction represses Tax homodimerization. (Microbial infection) Interacts with HIV-1 protein Tat; this interaction represses the Tat-dependent transactivation of the HIV-1 long terminal repeat (LTR) and reduces the nuclear translocation of Tat. In terms of assembly, (Microbial infection) Interacts with hepatitis B virus protein HBx; this interaction promotes the proteasomal degradation of HBx. As to quaternary structure, (Microbial infection) Interacts with human cytomegalovirus proteins IE1 and IE2. (Microbial infection) Interacts with Epstein Barr virus (EBV) lytic switch protein BZLF1; this interaction negatively regulates the transcriptional regulatory activity of BZLF1 by preventing the formation of the BZLF1-CBP complex. In terms of assembly, (Microbial infection) Interacts with influenza virus nucleoprotein NP. Requires Ca(2+) as cofactor. The cofactor is Mg(2+). Zn(2+) is required as a cofactor. Phosphorylation at Thr-161 by PKC/PKCD increases its phospholipid scramblase activity during both cell stimulation and apoptosis. Phosphorylated by OXSR1 in the presence of RELT. Post-translationally, palmitoylation is required for its phospholipid scramblase activity. Palmitoylation regulates its localization to the cell membrane or the nucleus; trafficking to the cell membrane is dependent upon palmitoylation whereas in the absence of palmitoylation, localizes to the nucleus. In terms of tissue distribution, expressed in platelets, erythrocyte membranes, lymphocytes, spleen, thymus, prostate, testis, uterus, intestine, colon, heart, placenta, lung, liver, kidney and pancreas. Not detected in brain and skeletal muscle.

It localises to the cell membrane. The protein localises to the nucleus. The protein resides in the cytoplasm. Its subcellular location is the perinuclear region. The catalysed reaction is a 1,2-diacyl-sn-glycero-3-phosphocholine(in) = a 1,2-diacyl-sn-glycero-3-phosphocholine(out). It carries out the reaction a 1,2-diacyl-sn-glycero-3-phosphoethanolamine(in) = a 1,2-diacyl-sn-glycero-3-phosphoethanolamine(out). The enzyme catalyses a 1,2-diacyl-sn-glycero-3-phospho-L-serine(in) = a 1,2-diacyl-sn-glycero-3-phospho-L-serine(out). Its activity is regulated as follows. Activated by Pb(2+) and Hg(2+) ions. Phosphorylation at Thr-161 by PKC/PKCD increases its phospholipid scramblase activity during both cell stimulation and apoptosis. In terms of biological role, catalyzes calcium-induced ATP-independent rapid bidirectional and non-specific movement of phospholipids (lipid scrambling or lipid flip-flop) between the inner and outer leaflet of the plasma membrane resulting in collapse of the phospholipid asymmetry which leads to phosphatidylserine externalization on the cell surface. Mediates calcium-dependent phosphatidylserine externalization and apoptosis in neurons via its association with TRPC5. Also exhibits magnesium-dependent nuclease activity against double-stranded DNA and RNA but not single-stranded DNA and can enhance DNA decatenation mediated by TOP2A. Negatively regulates FcR-mediated phagocytosis in differentiated macrophages. May contribute to cytokine-regulated cell proliferation and differentiation. May play a role in the antiviral response of interferon (IFN) by amplifying and enhancing the IFN response through increased expression of select subset of potent antiviral genes. Inhibits the functions of viral transactivators, including human T-cell leukemia virus (HTLV)-1 protein Tax, human immunodeficiency virus (HIV)-1 Tat, human hepatitis B virus (HBV) HBx, Epstein-Barr virus (EBV) BZLF1 and human cytomegalovirus IE1 and IE2 proteins through direct interactions. Also mediates the inhibition of influenza virus infection by preventing nuclear import of the viral nucleoprotein/NP. Plays a crucial role as a defense factor against SARS-CoV-2 independently of its scramblase activity by directly targeting nascent viral vesicles to prevent virus-membrane fusion and the release of viral RNA into the host-cell cytosol. Its function is as follows. (Microbial infection) Acts as an attachment receptor for HCV. This is Phospholipid scramblase 1 (PLSCR1) from Homo sapiens (Human).